The primary structure comprises 188 residues: Kappa-casein (188 aa).

Positions Met-1 to Ala-21 are cleaved as a signal peptide. 2 O-linked (GalNAc...) threonine glycosylation sites follow: Thr-143 and Thr-148. Thr-163 carries the post-translational modification Phosphothreonine. Ser-167 is modified (phosphoserine; alternate). Ser-167 carries O-linked (GalNAc...) serine; alternate glycosylation. A glycan (O-linked (GalNAc...) threonine) is linked at Thr-184. Ser-185 bears the Phosphoserine mark.

Belongs to the kappa-casein family. As to expression, mammary gland specific. Secreted in milk.

The protein resides in the secreted. Kappa-casein stabilizes micelle formation, preventing casein precipitation in milk. The polypeptide is Kappa-casein (CSN3) (Sus scrofa (Pig)).